Here is a 332-residue protein sequence, read N- to C-terminus: Holliday junction branch migration complex subunit RuvB (332 aa).

A large ATPase domain (RuvB-L) region spans residues 1-181 (MTRFLDSDAM…FGITGHMEYY (181 aa)). ATP is bound by residues L20, R21, G62, K65, T66, T67, 128–130 (EDF), R171, Y181, and R218. T66 contributes to the Mg(2+) binding site. The segment at 182–252 (EENDLTEIIE…ITDKALTMLD (71 aa)) is small ATPAse domain (RuvB-S). Residues 255–332 (HEGLDYVDQK…EHLGYQRFDK (78 aa)) form a head domain (RuvB-H) region. Positions 291, 310, 312, and 315 each coordinate DNA.

It belongs to the RuvB family. As to quaternary structure, homohexamer. Forms an RuvA(8)-RuvB(12)-Holliday junction (HJ) complex. HJ DNA is sandwiched between 2 RuvA tetramers; dsDNA enters through RuvA and exits via RuvB. An RuvB hexamer assembles on each DNA strand where it exits the tetramer. Each RuvB hexamer is contacted by two RuvA subunits (via domain III) on 2 adjacent RuvB subunits; this complex drives branch migration. In the full resolvosome a probable DNA-RuvA(4)-RuvB(12)-RuvC(2) complex forms which resolves the HJ.

It localises to the cytoplasm. It carries out the reaction ATP + H2O = ADP + phosphate + H(+). Its function is as follows. The RuvA-RuvB-RuvC complex processes Holliday junction (HJ) DNA during genetic recombination and DNA repair, while the RuvA-RuvB complex plays an important role in the rescue of blocked DNA replication forks via replication fork reversal (RFR). RuvA specifically binds to HJ cruciform DNA, conferring on it an open structure. The RuvB hexamer acts as an ATP-dependent pump, pulling dsDNA into and through the RuvAB complex. RuvB forms 2 homohexamers on either side of HJ DNA bound by 1 or 2 RuvA tetramers; 4 subunits per hexamer contact DNA at a time. Coordinated motions by a converter formed by DNA-disengaged RuvB subunits stimulates ATP hydrolysis and nucleotide exchange. Immobilization of the converter enables RuvB to convert the ATP-contained energy into a lever motion, pulling 2 nucleotides of DNA out of the RuvA tetramer per ATP hydrolyzed, thus driving DNA branch migration. The RuvB motors rotate together with the DNA substrate, which together with the progressing nucleotide cycle form the mechanistic basis for DNA recombination by continuous HJ branch migration. Branch migration allows RuvC to scan DNA until it finds its consensus sequence, where it cleaves and resolves cruciform DNA. The sequence is that of Holliday junction branch migration complex subunit RuvB from Streptococcus agalactiae serotype V (strain ATCC BAA-611 / 2603 V/R).